We begin with the raw amino-acid sequence, 319 residues long: ATP-dependent 6-phosphofructokinase (319 aa).

Glycine 11 is an ATP binding site. ADP is bound at residue 21-25; the sequence is RAVVR. ATP is bound by residues 72–73 and 102–105; these read RC and GDGS. Aspartate 103 contributes to the Mg(2+) binding site. Residue 125 to 127 coordinates substrate; it reads TID. Aspartate 127 serves as the catalytic Proton acceptor. Residue arginine 154 participates in ADP binding. Substrate is bound by residues arginine 162 and 169-171; that span reads MGR. ADP is bound by residues 185–187, lysine 211, and 213–215; these read GAE and KMH. Substrate is bound by residues glutamate 222, arginine 243, and 249 to 252; that span reads HIQR.

It belongs to the phosphofructokinase type A (PFKA) family. ATP-dependent PFK group I subfamily. Prokaryotic clade 'B1' sub-subfamily. As to quaternary structure, homotetramer. Mg(2+) is required as a cofactor.

Its subcellular location is the cytoplasm. It catalyses the reaction beta-D-fructose 6-phosphate + ATP = beta-D-fructose 1,6-bisphosphate + ADP + H(+). It participates in carbohydrate degradation; glycolysis; D-glyceraldehyde 3-phosphate and glycerone phosphate from D-glucose: step 3/4. Allosterically activated by ADP and other diphosphonucleosides, and allosterically inhibited by phosphoenolpyruvate. Functionally, catalyzes the phosphorylation of D-fructose 6-phosphate to fructose 1,6-bisphosphate by ATP, the first committing step of glycolysis. In Clostridium botulinum (strain ATCC 19397 / Type A), this protein is ATP-dependent 6-phosphofructokinase.